The primary structure comprises 158 residues: uncharacterized protein (158 aa).

2 consecutive transmembrane segments (helical) span residues 10-30 (LSSL…QFIV) and 137-157 (IEVF…AYFF).

The protein localises to the cell membrane. This is an uncharacterized protein from Bacillus subtilis (strain 168).